The primary structure comprises 37 residues: Cytochrome b6-f complex subunit 5 (37 aa).

Residues 5–25 traverse the membrane as a helical segment; the sequence is ILLGIVLGMVLVTLAGLFVAA.

It belongs to the PetG family. In terms of assembly, the 4 large subunits of the cytochrome b6-f complex are cytochrome b6, subunit IV (17 kDa polypeptide, PetD), cytochrome f and the Rieske protein, while the 4 small subunits are PetG, PetL, PetM and PetN. The complex functions as a dimer.

It localises to the cellular thylakoid membrane. In terms of biological role, component of the cytochrome b6-f complex, which mediates electron transfer between photosystem II (PSII) and photosystem I (PSI), cyclic electron flow around PSI, and state transitions. PetG is required for either the stability or assembly of the cytochrome b6-f complex. In Synechococcus sp. (strain JA-3-3Ab) (Cyanobacteria bacterium Yellowstone A-Prime), this protein is Cytochrome b6-f complex subunit 5.